The following is a 453-amino-acid chain: Glutamyl-tRNA(Gln) amidotransferase subunit A (453 aa).

Residues Lys56 and Ser131 each act as charge relay system in the active site. The active-site Acyl-ester intermediate is Ser155.

Belongs to the amidase family. GatA subfamily. As to quaternary structure, heterotrimer of A, B and C subunits.

It catalyses the reaction L-glutamyl-tRNA(Gln) + L-glutamine + ATP + H2O = L-glutaminyl-tRNA(Gln) + L-glutamate + ADP + phosphate + H(+). Allows the formation of correctly charged Gln-tRNA(Gln) through the transamidation of misacylated Glu-tRNA(Gln) in organisms which lack glutaminyl-tRNA synthetase. The reaction takes place in the presence of glutamine and ATP through an activated gamma-phospho-Glu-tRNA(Gln). This Campylobacter jejuni subsp. jejuni serotype O:6 (strain 81116 / NCTC 11828) protein is Glutamyl-tRNA(Gln) amidotransferase subunit A.